Here is a 204-residue protein sequence, read N- to C-terminus: Hydrophilin YNL190W (204 aa).

The N-terminal stretch at 1–20 is a signal peptide; that stretch reads MKFSSVTAITLATVATVATA. Residues 35–46 are compositionally biased toward low complexity; the sequence is SDGSLTTTTSTH. Positions 35-179 are disordered; it reads SDGSLTTTTS…ARKNNAAPGP (145 aa). Over residues 47-59 the composition is skewed to basic residues; it reads TTHKYGKFNKTSK. 11 N-linked (GlcNAc...) asparagine glycosylation sites follow: Asn-55, Asn-64, Asn-75, Asn-84, Asn-95, Asn-104, Asn-115, Asn-124, Asn-135, Asn-144, and Asn-155. Over residues 67 to 79 the composition is skewed to basic residues; that stretch reads GTHKYGKFNKTSK. Positions 87–99 are enriched in basic residues; that stretch reads GTHKYGKFNKTSK. Over residues 107-119 the composition is skewed to basic residues; it reads GTHKYGKFNKTSK. Over residues 127–139 the composition is skewed to basic residues; sequence GTHKYGKFNKTSK. Over residues 147-156 the composition is skewed to basic residues; the sequence is GTHKYGKFNK. Asn-174 carries GPI-anchor amidated asparagine lipidation. The propeptide at 175–204 is removed in mature form; sequence AAPGPSNFNSIKLFGVTAGSAAVAGALLLL.

The protein belongs to the PGA14 family. Post-translationally, the GPI-anchor is attached to the protein in the endoplasmic reticulum and serves to target the protein to the cell surface. There, the glucosamine-inositol phospholipid moiety is cleaved off and the GPI-modified mannoprotein is covalently attached via its lipidless GPI glycan remnant to the 1,6-beta-glucan of the outer cell wall layer.

Its subcellular location is the secreted. It is found in the cell wall. The protein localises to the membrane. Functionally, hydrophilin which is essential to overcome the simple stress of the desiccation-rehydration process. The sequence is that of Hydrophilin YNL190W from Saccharomyces cerevisiae (strain ATCC 204508 / S288c) (Baker's yeast).